A 148-amino-acid chain; its full sequence is Short form salivary protein D7S1 (148 aa).

The first 21 residues, 1–21 (MKQNVFFLIAYFSLVFCMCNA), serve as a signal peptide directing secretion. 3 disulfides stabilise this stretch: cysteine 28–cysteine 61, cysteine 41–cysteine 147, and cysteine 103–cysteine 119.

Belongs to the PBP/GOBP family. In terms of tissue distribution, female salivary gland.

It localises to the secreted. In contrast to the related D7 salivary proteins that can bind biogenic amines, does not bind serotonin. This chain is Short form salivary protein D7S1, found in Aedes aegypti (Yellowfever mosquito).